A 311-amino-acid polypeptide reads, in one-letter code: MAVTFPPKISPTLMTPDPHFIPGYSGFCPQYRYSLGKTYGQLTSHLLTNPDIRRSGHLVLQSNPFPPAPRGHSYNEASQELGGRRRRQRLGDPKLTISMIPGYTGFIPRSQKFFAKTYAETSWDALSDFHNEQQMQESQRQEMLLTSKLQEGRQPQTEHEKQLLTARHRTPLPALSKEPAPFMSLRGFQPQGSPYYMEEENPNKYFISGYTGYVPRSRFLIGNGYPITTNRAMVEFAHMNQKKGVRFSDQQGHNEGDNLHTEQGQIYLEELGLLPRYTGYVPGYKFQFGNTFGRLTQNALGQSTLQKQTVN.

2 disordered regions span residues 64 to 93 (PFPP…LGDP) and 150 to 183 (QEGR…APFM).

It belongs to the CIMIP2 family. In terms of tissue distribution, expressed in airway epithelial cells.

It is found in the cytoplasm. The protein resides in the cytoskeleton. Its subcellular location is the cilium axoneme. In terms of biological role, microtubule inner protein (MIP) part of the dynein-decorated doublet microtubules (DMTs) in cilia axoneme, which is required for motile cilia beating. In Xenopus laevis (African clawed frog), this protein is Ciliary microtubule inner protein 2B (cimip2b).